Here is a 199-residue protein sequence, read N- to C-terminus: Probable nicotinate-nucleotide adenylyltransferase (199 aa).

Belongs to the NadD family.

It carries out the reaction nicotinate beta-D-ribonucleotide + ATP + H(+) = deamido-NAD(+) + diphosphate. Its pathway is cofactor biosynthesis; NAD(+) biosynthesis; deamido-NAD(+) from nicotinate D-ribonucleotide: step 1/1. Catalyzes the reversible adenylation of nicotinate mononucleotide (NaMN) to nicotinic acid adenine dinucleotide (NaAD). This is Probable nicotinate-nucleotide adenylyltransferase from Leptospira interrogans serogroup Icterohaemorrhagiae serovar copenhageni (strain Fiocruz L1-130).